We begin with the raw amino-acid sequence, 513 residues long: Maturase K (513 aa).

This sequence belongs to the intron maturase 2 family. MatK subfamily.

The protein resides in the plastid. Its subcellular location is the chloroplast. Its function is as follows. Usually encoded in the trnK tRNA gene intron. Probably assists in splicing its own and other chloroplast group II introns. This chain is Maturase K, found in Eleusine indica (Goosegrass).